Consider the following 261-residue polypeptide: uncharacterized protein (261 aa).

This is an uncharacterized protein from Saccharomyces cerevisiae (strain ATCC 204508 / S288c) (Baker's yeast).